A 178-amino-acid polypeptide reads, in one-letter code: Imidazoleglycerol-phosphate dehydratase (178 aa).

The protein belongs to the imidazoleglycerol-phosphate dehydratase family.

Its subcellular location is the cytoplasm. It carries out the reaction D-erythro-1-(imidazol-4-yl)glycerol 3-phosphate = 3-(imidazol-4-yl)-2-oxopropyl phosphate + H2O. It functions in the pathway amino-acid biosynthesis; L-histidine biosynthesis; L-histidine from 5-phospho-alpha-D-ribose 1-diphosphate: step 6/9. The chain is Imidazoleglycerol-phosphate dehydratase from Archaeoglobus fulgidus (strain ATCC 49558 / DSM 4304 / JCM 9628 / NBRC 100126 / VC-16).